Reading from the N-terminus, the 54-residue chain is Rubredoxin (54 aa).

Met1 is modified (N-formylmethionine). Residues 1–54 form the Rubredoxin-like domain; sequence MKKYTCTVCGYIYNPEDGDPDNGVNPGTDFKDIPDDWVCPLCGVGKDQFEEVEE. The Fe cation site is built by Cys6, Cys9, Cys39, and Cys42.

This sequence belongs to the rubredoxin family. Fe(3+) serves as cofactor.

Rubredoxin is a small nonheme, iron protein lacking acid-labile sulfide. Its single Fe, chelated to 4 Cys, functions as an electron acceptor and may also stabilize the conformation of the molecule. The chain is Rubredoxin from Clostridium pasteurianum.